The following is a 222-amino-acid chain: 3,4-dihydroxy-2-butanone 4-phosphate synthase (222 aa).

Residues 37–38, Asp-42, 150–154, and Glu-174 contribute to the D-ribulose 5-phosphate site; these read RE and RPGHT. Mg(2+) is bound at residue Glu-38. His-153 contacts Mg(2+).

It belongs to the DHBP synthase family. Homodimer. Mg(2+) is required as a cofactor. Requires Mn(2+) as cofactor.

It carries out the reaction D-ribulose 5-phosphate = (2S)-2-hydroxy-3-oxobutyl phosphate + formate + H(+). Its pathway is cofactor biosynthesis; riboflavin biosynthesis; 2-hydroxy-3-oxobutyl phosphate from D-ribulose 5-phosphate: step 1/1. Catalyzes the conversion of D-ribulose 5-phosphate to formate and 3,4-dihydroxy-2-butanone 4-phosphate. The sequence is that of 3,4-dihydroxy-2-butanone 4-phosphate synthase from Chlorobium limicola (strain DSM 245 / NBRC 103803 / 6330).